Consider the following 443-residue polypeptide: 23S rRNA (uracil(1939)-C(5))-methyltransferase RlmD (443 aa).

Positions 12 to 70 (AKKLSQKIALKVQRLDHLGAGIAEHQGKVVFIPGALPGETVEVQLTEQKKNYARAKLQR) constitute a TRAM domain. [4Fe-4S] cluster contacts are provided by C83, C89, C92, and C171. Positions 276, 305, 310, 326, 353, and 373 each coordinate S-adenosyl-L-methionine. The active-site Nucleophile is the C399.

The protein belongs to the class I-like SAM-binding methyltransferase superfamily. RNA M5U methyltransferase family. RlmD subfamily.

It catalyses the reaction uridine(1939) in 23S rRNA + S-adenosyl-L-methionine = 5-methyluridine(1939) in 23S rRNA + S-adenosyl-L-homocysteine + H(+). Functionally, catalyzes the formation of 5-methyl-uridine at position 1939 (m5U1939) in 23S rRNA. The protein is 23S rRNA (uracil(1939)-C(5))-methyltransferase RlmD of Shewanella amazonensis (strain ATCC BAA-1098 / SB2B).